The primary structure comprises 249 residues: ATP synthase subunit a (249 aa).

6 helical membrane-spanning segments follow: residues Ser-30–Gly-50, Phe-84–Ile-104, His-113–Phe-133, Ile-143–Phe-163, Leu-196–Val-216, and Leu-221–Leu-241.

It belongs to the ATPase A chain family. In terms of assembly, F-type ATPases have 2 components, CF(1) - the catalytic core - and CF(0) - the membrane proton channel. CF(1) has five subunits: alpha(3), beta(3), gamma(1), delta(1), epsilon(1). CF(0) has four main subunits: a, b, b' and c.

The protein resides in the cell inner membrane. Its function is as follows. Key component of the proton channel; it plays a direct role in the translocation of protons across the membrane. In Rhodopseudomonas palustris (strain BisA53), this protein is ATP synthase subunit a.